Consider the following 359-residue polypeptide: MNLNPPTSALQIEGKGSHIMARNVSCFLVRHTPHPRRVCHIKGLNNIPICTVNDDENAFGTLWGVGQSNYLEKNRIPFANCSYPSSTAVQESPVRGMSPAPNGAKVPPRPHSEPSRKIKECFKTSSENPLVIKKEEIKAKRPPSPPKACSTPGSCSSGMTSTKNDVKANTICIPNYLDQEIKILAKLCSILHTDSLAEVLQWLLHATSKEKEWVSALIHSELAEINLLTHHRRNTSMEPAAETGKPPTVKSPPTVKLPPNFTAKSKVLTRDTEGDQPTRVSSQGSEENKEVPKEAEHKPPLLIRRNNMKIPVAEYFSKPNSPPRPNTQESGSAKPVSARSIQEYNLCPQRACYPSTHRR.

3 disordered regions span residues Q90–K117, I132–S161, and T235–R359. A compositionally biased stretch (polar residues) spans T151–S161. Over residues K245 to P259 the composition is skewed to low complexity. Over residues E286 to P299 the composition is skewed to basic and acidic residues.

This is an uncharacterized protein from Homo sapiens (Human).